Reading from the N-terminus, the 295-residue chain is UDP-N-acetylenolpyruvoylglucosamine reductase (295 aa).

Residues 27–194 (GVGGEAEVWF…TRVRLKLRRS (168 aa)) form the FAD-binding PCMH-type domain. The active site involves Arg174. Cys221 serves as the catalytic Proton donor. Glu287 is an active-site residue.

Belongs to the MurB family. The cofactor is FAD.

It localises to the cytoplasm. It carries out the reaction UDP-N-acetyl-alpha-D-muramate + NADP(+) = UDP-N-acetyl-3-O-(1-carboxyvinyl)-alpha-D-glucosamine + NADPH + H(+). The protein operates within cell wall biogenesis; peptidoglycan biosynthesis. Cell wall formation. The protein is UDP-N-acetylenolpyruvoylglucosamine reductase of Deinococcus geothermalis (strain DSM 11300 / CIP 105573 / AG-3a).